A 321-amino-acid polypeptide reads, in one-letter code: tRNA(Ile)-lysidine synthase (321 aa).

Serine 30 to serine 35 contacts ATP.

Belongs to the tRNA(Ile)-lysidine synthase family.

Its subcellular location is the cytoplasm. It catalyses the reaction cytidine(34) in tRNA(Ile2) + L-lysine + ATP = lysidine(34) in tRNA(Ile2) + AMP + diphosphate + H(+). Its function is as follows. Ligates lysine onto the cytidine present at position 34 of the AUA codon-specific tRNA(Ile) that contains the anticodon CAU, in an ATP-dependent manner. Cytidine is converted to lysidine, thus changing the amino acid specificity of the tRNA from methionine to isoleucine. The sequence is that of tRNA(Ile)-lysidine synthase from Chlamydia trachomatis serovar L2 (strain ATCC VR-902B / DSM 19102 / 434/Bu).